Consider the following 555-residue polypeptide: Urocanate hydratase (555 aa).

Residues 52-53 (GG), Gln-130, 176-178 (GMG), Glu-196, Arg-201, 242-243 (NA), 263-267 (QTSAH), 273-274 (YL), and Tyr-322 contribute to the NAD(+) site. The active site involves Cys-410. Gly-492 provides a ligand contact to NAD(+).

The protein belongs to the urocanase family. It depends on NAD(+) as a cofactor.

The protein resides in the cytoplasm. The catalysed reaction is 4-imidazolone-5-propanoate = trans-urocanate + H2O. Its pathway is amino-acid degradation; L-histidine degradation into L-glutamate; N-formimidoyl-L-glutamate from L-histidine: step 2/3. Its function is as follows. Catalyzes the conversion of urocanate to 4-imidazolone-5-propionate. This Shewanella baltica (strain OS195) protein is Urocanate hydratase.